The sequence spans 48 residues: Protein PsbN (48 aa).

Residues 12–34 form a helical membrane-spanning segment; that stretch reads LLIAMVTITFGLTGYGLYTAFGP.

This sequence belongs to the PsbN family.

Its subcellular location is the cellular thylakoid membrane. May play a role in photosystem I and II biogenesis. This Prochlorococcus marinus (strain MIT 9313) protein is Protein PsbN.